The sequence spans 440 residues: Argininosuccinate lyase (440 aa).

This sequence belongs to the lyase 1 family. Argininosuccinate lyase subfamily.

It is found in the cytoplasm. It carries out the reaction 2-(N(omega)-L-arginino)succinate = fumarate + L-arginine. Its pathway is amino-acid biosynthesis; L-arginine biosynthesis; L-arginine from L-ornithine and carbamoyl phosphate: step 3/3. This Clostridium botulinum (strain ATCC 19397 / Type A) protein is Argininosuccinate lyase.